The chain runs to 242 residues: Ubiquinone biosynthesis O-methyltransferase (242 aa).

Residues Arg-44, Gly-64, Asp-85, and Met-129 each coordinate S-adenosyl-L-methionine.

Belongs to the methyltransferase superfamily. UbiG/COQ3 family.

The enzyme catalyses a 3-demethylubiquinol + S-adenosyl-L-methionine = a ubiquinol + S-adenosyl-L-homocysteine + H(+). It carries out the reaction a 3-(all-trans-polyprenyl)benzene-1,2-diol + S-adenosyl-L-methionine = a 2-methoxy-6-(all-trans-polyprenyl)phenol + S-adenosyl-L-homocysteine + H(+). It participates in cofactor biosynthesis; ubiquinone biosynthesis. In terms of biological role, O-methyltransferase that catalyzes the 2 O-methylation steps in the ubiquinone biosynthetic pathway. This Salmonella typhi protein is Ubiquinone biosynthesis O-methyltransferase.